The following is a 1405-amino-acid chain: DNA-directed RNA polymerase subunit beta' (1405 aa).

Residues Cys70, Cys72, Cys85, and Cys88 each contribute to the Zn(2+) site. 3 residues coordinate Mg(2+): Asp460, Asp462, and Asp464. 4 residues coordinate Zn(2+): Cys815, Cys890, Cys897, and Cys900. A disordered region spans residues 1375-1405 (GLTDSEMETLSGKPAGAEPVAALADAGADEE).

The protein belongs to the RNA polymerase beta' chain family. The RNAP catalytic core consists of 2 alpha, 1 beta, 1 beta' and 1 omega subunit. When a sigma factor is associated with the core the holoenzyme is formed, which can initiate transcription. It depends on Mg(2+) as a cofactor. Requires Zn(2+) as cofactor.

It catalyses the reaction RNA(n) + a ribonucleoside 5'-triphosphate = RNA(n+1) + diphosphate. Its function is as follows. DNA-dependent RNA polymerase catalyzes the transcription of DNA into RNA using the four ribonucleoside triphosphates as substrates. In Xanthomonas oryzae pv. oryzae (strain MAFF 311018), this protein is DNA-directed RNA polymerase subunit beta'.